Consider the following 295-residue polypeptide: Secreted frizzled-related protein 2 (295 aa).

Positions Met1–Gly24 are cleaved as a signal peptide. The FZ domain maps to Tyr35–Leu155. Disulfide bonds link Cys40-Cys103, Cys50-Cys96, Cys87-Cys125, Cys114-Cys152, Cys118-Cys142, Cys172-Cys245, Cys175-Cys247, and Cys190-Cys295. Residues Cys172 to Cys295 form the NTR domain.

It belongs to the secreted frizzled-related protein (sFRP) family. Expressed in adipose tissue, heart, brain, skeletal muscle, pancreas, thymus, prostate, testis, ovary, small intestine and colon. Highest levels in adipose tissue, small intestine and colon.

Its subcellular location is the secreted. Its function is as follows. Soluble frizzled-related proteins (sFRPS) function as modulators of Wnt signaling through direct interaction with Wnts. They have a role in regulating cell growth and differentiation in specific cell types. SFRP2 may be important for eye retinal development and for myogenesis. In Homo sapiens (Human), this protein is Secreted frizzled-related protein 2 (SFRP2).